A 507-amino-acid polypeptide reads, in one-letter code: Putative F-box/LRR-repeat protein At4g00320 (507 aa).

Positions 12–60 constitute an F-box domain; sequence RDGISGLPDAMICHILSFLPTKVAASTTVLAKRWKPLLAFMPNLDFDES. LRR repeat units lie at residues 135 to 163, 187 to 212, 214 to 240, 317 to 348, and 349 to 374; these read RGFG…KIQF, YVKM…LLMN, IWKE…KFSR, ILYL…TIRT, and GVHI…VFEG.

The chain is Putative F-box/LRR-repeat protein At4g00320 from Arabidopsis thaliana (Mouse-ear cress).